A 547-amino-acid chain; its full sequence is uncharacterized protein (547 aa).

Helical transmembrane passes span 33-53 (PTFFFALFSAAYVFIDQIMVI), 107-127 (PLIVLLNAINIFIPLGTGVIF), 145-165 (TGLISTTVFGLITQFLVLSFA), 203-223 (VYILIGLNIIPMLSRLFFYLA), 231-251 (FIAIVPPIANLINILIVFLLV), 263-283 (VAGILGYLINFLAYIIYLIYL), 298-318 (LNKIDFNLLVVVSLIGMASFF), 351-371 (TLLTGPIAISNLASAAIFGLL), 397-417 (TVIICISFGSLIYLLTAVAFG), 432-452 (LDLANYFSLIVQAQVFFVATG), 470-490 (IVSLTHGLFVFIPLLFIFQAI), and 499-519 (VFIWLLTANAALAGLINIAFG).

The protein resides in the cell membrane. This is an uncharacterized protein from Mycoplasma genitalium (strain ATCC 33530 / DSM 19775 / NCTC 10195 / G37) (Mycoplasmoides genitalium).